Consider the following 150-residue polypeptide: Large ribosomal subunit protein bL9 (150 aa).

The protein belongs to the bacterial ribosomal protein bL9 family.

Its function is as follows. Binds to the 23S rRNA. This is Large ribosomal subunit protein bL9 from Alcanivorax borkumensis (strain ATCC 700651 / DSM 11573 / NCIMB 13689 / SK2).